We begin with the raw amino-acid sequence, 449 residues long: Glucose-6-phosphate isomerase (449 aa).

E291 functions as the Proton donor in the catalytic mechanism. Catalysis depends on residues H312 and K426.

The protein belongs to the GPI family.

Its subcellular location is the cytoplasm. It carries out the reaction alpha-D-glucose 6-phosphate = beta-D-fructose 6-phosphate. It participates in carbohydrate biosynthesis; gluconeogenesis. The protein operates within carbohydrate degradation; glycolysis; D-glyceraldehyde 3-phosphate and glycerone phosphate from D-glucose: step 2/4. Its function is as follows. Catalyzes the reversible isomerization of glucose-6-phosphate to fructose-6-phosphate. This Enterococcus faecalis (strain ATCC 700802 / V583) protein is Glucose-6-phosphate isomerase.